Consider the following 716-residue polypeptide: Polyribonucleotide nucleotidyltransferase (716 aa).

Residues Asp-490 and Asp-496 each contribute to the Mg(2+) site. The KH domain occupies 556–615 (PKIETLTIPTDKIREVIGSGGKVIREIVETSGAKVDINDDGVIKIASNDQAAIKKAYDMI). In terms of domain architecture, S1 motif spans 625–693 (GQIYTGKVVK…ERGKVRLGMK (69 aa)). The disordered stretch occupies residues 695-716 (VDQETGQEIQPEKKEREEAGEA). Residues 704–716 (QPEKKEREEAGEA) are compositionally biased toward basic and acidic residues.

The protein belongs to the polyribonucleotide nucleotidyltransferase family. Requires Mg(2+) as cofactor.

The protein localises to the cytoplasm. It catalyses the reaction RNA(n+1) + phosphate = RNA(n) + a ribonucleoside 5'-diphosphate. Its function is as follows. Involved in mRNA degradation. Catalyzes the phosphorolysis of single-stranded polyribonucleotides processively in the 3'- to 5'-direction. The sequence is that of Polyribonucleotide nucleotidyltransferase from Cereibacter sphaeroides (strain KD131 / KCTC 12085) (Rhodobacter sphaeroides).